Here is a 240-residue protein sequence, read N- to C-terminus: MSGDASTPEQDPAQVVADGQQPVETPNDPVETPSASDPGSAAEVSPQTGNNEARLEQLEREHTTLRDEHDVLRGQYMRIAADFDNFRKRQSRDQDDLKIQLTCSTLSEILPVVDNFERARQQLDPQGEEAQALHRSYQGLYKQLVDVLKQLGVAPMRVVGQEFDPTLHEAVLREPSDAHPEDVVIEELQRGYHLNGKVLRHAMVKVSMGPGPQDGASSQPAEAPAADAPAEDSGSGDGNG.

Disordered stretches follow at residues 1–54 (MSGD…NEAR) and 206–240 (VSMG…DGNG). Positions 215 to 233 (GASSQPAEAPAADAPAEDS) are enriched in low complexity.

This sequence belongs to the GrpE family. Homodimer.

It localises to the cytoplasm. In terms of biological role, participates actively in the response to hyperosmotic and heat shock by preventing the aggregation of stress-denatured proteins, in association with DnaK and GrpE. It is the nucleotide exchange factor for DnaK and may function as a thermosensor. Unfolded proteins bind initially to DnaJ; upon interaction with the DnaJ-bound protein, DnaK hydrolyzes its bound ATP, resulting in the formation of a stable complex. GrpE releases ADP from DnaK; ATP binding to DnaK triggers the release of the substrate protein, thus completing the reaction cycle. Several rounds of ATP-dependent interactions between DnaJ, DnaK and GrpE are required for fully efficient folding. In Synechococcus sp. (strain WH7803), this protein is Protein GrpE.